Here is a 378-residue protein sequence, read N- to C-terminus: Circumsporozoite protein (378 aa).

Residues 1–22 form the signal peptide; that stretch reads MKNFNLLVVSSILLVDLFPTNC. Residues 50–288 form a disordered region; that stretch reads AQVRQSASRG…AGAGQGQNNE (239 aa). Residues 65 to 93 are compositionally biased toward basic and acidic residues; it reads NPKDEEGADKPKKKEEKKVEPKKPRENKL. A required for the binding to heparan sulfate proteoglycans (HSPGs) on the surface of host hepatocytes region spans residues 81-89; it reads KKVEPKKPR. The region I; contains the proteolytic cleavage site stretch occupies residues 92–96; sequence KLKQP. Positions 96-203 are enriched in low complexity; sequence PPAGDGAPEG…RAGGQPAAGG (108 aa). A 1-1; truncated repeat occupies 97-102; the sequence is PAGDGA. Residues 97 to 191 are 11 X 9 AA tandem repeats of P-[AE]-G-D-G-A-P-A-[AG]; the sequence is PAGDGAPEGD…AAPAGDGAPA (95 aa). 13 consecutive repeat copies span residues 103 to 111, 112 to 120, 121 to 129, 130 to 138, 139 to 147, 148 to 156, 157 to 165, 166 to 174, 175 to 183, 184 to 191, 193 to 208, 209 to 224, and 225 to 240. The tract at residues 193–268 is 6 X 16 AA approximate tandem repeats of N-R-A-G-G-Q-P-A-A-G-G-N-Q-A-G-G; the sequence is NRAGGQPAAG…GAQAGGANAG (76 aa). Over residues 228-251 the composition is skewed to low complexity; that stretch reads GGQPAAGGNQAGGQPAAGGNQAGA. Residues 241 to 251 form a 2-4; approximate; truncated repeat; that stretch reads QPAAGGNQAGA. The stretch at 252–260 is one 2-5; approximate; truncated repeat; sequence QAGGNQAGA. 2 stretches are compositionally biased toward gly residues: residues 252–266 and 274–283; these read QAGG…GGAN and EAGGNAGAGQ. The stretch at 261–268 is one 2-6; approximate; truncated repeat; the sequence is QAGGANAG. Residues 304–356 enclose the TSP type-1 domain; sequence KIRSTLGVEWSPCSVTCGKGVRMRRKVSAANKKPEELDVNDLETEVCTMDKCA. Intrachain disulfides connect cysteine 316-cysteine 350 and cysteine 320-cysteine 355. An O-linked (Fuc) threonine glycan is attached at threonine 319. Cysteine 355 is lipidated: GPI-anchor amidated cysteine. Positions 356-378 are cleaved as a propeptide — removed in mature form; the sequence is AGIFNVVSNSLRLVILLVLALFN.

It belongs to the plasmodium circumsporozoite protein family. In terms of processing, during host cell invasion, proteolytically cleaved at the cell membrane in the region I by a papain-like cysteine protease of parasite origin. Cleavage is triggered by the sporozoite contact with highly sulfated heparan sulfate proteoglycans (HSPGs) present on the host hepatocyte cell surface. Cleavage exposes the TSP type-1 (TSR) domain and is required for productive invasion of host hepatocytes but not for adhesion to the host cell membrane. Cleavage is dispensable for sporozoite development in the oocyst, motility and for traversal of host and vector cells. Post-translationally, O-glycosylated; maybe by POFUT2.

Its subcellular location is the cell membrane. The protein localises to the cytoplasm. Functionally, essential sporozoite protein. In the mosquito vector, required for sporozoite development in the oocyst, migration through the vector hemolymph and entry into the vector salivary glands. In the vertebrate host, required for sporozoite migration through the host dermis and infection of host hepatocytes. Binds to highly sulfated heparan sulfate proteoglycans (HSPGs) on the surface of host hepatocytes. Its function is as follows. In the vertebrate host, binds to highly sulfated heparan sulfate proteoglycans (HSPGs) on the surface of host hepatocytes and is required for sporozoite invasion of the host hepatocytes. This is Circumsporozoite protein from Plasmodium cynomolgi (strain Berok).